Consider the following 182-residue polypeptide: Nuclear cap-binding protein subunit 2 (182 aa).

MRNA is bound by residues Y13, Y35, 104–108 (RADLD), 115–119 (RQYGR), and 125–126 (QV). Residues 32 to 110 (NCVYVGNLSF…RIIRADLDHG (79 aa)) enclose the RRM domain. Positions 114–182 (GRQYGRGASG…NPRYNRWKKN (69 aa)) are disordered. Residues 126–136 (VRDEMREEFDP) show a composition bias toward basic and acidic residues. A compositionally biased stretch (polar residues) spans 145 to 175 (RQPTSSRQLANYSGISSAPLGSSLELQSNPR).

Belongs to the RRM NCBP2 family. As to quaternary structure, component of the nuclear cap-binding complex (CBC), a heterodimer composed of cbc1 and cbc2 that interacts with capped RNAs.

It localises to the cytoplasm. It is found in the perinuclear region. The protein resides in the nucleus. Component of the CBC complex, which binds co-transcriptionally to the 5' cap of pre-mRNAs and is involved in maturation, export and degradation of nuclear mRNAs. In Schizosaccharomyces pombe (strain 972 / ATCC 24843) (Fission yeast), this protein is Nuclear cap-binding protein subunit 2 (cbc2).